Consider the following 212-residue polypeptide: Inner membrane-spanning protein YciB (212 aa).

A run of 6 helical transmembrane segments spans residues 19–39 (FYGALPPEWILAVGVWLPVAL), 47–67 (AIYLATAVAMVVMAVQLALGL), 82–102 (AVILVLGGATLWLHDPVFILW), 105–122 (TLVNWLFALVFMAPPLFG), 147–167 (LAWVVFFLVSGLANLFVAYTF), and 177–197 (LFGMLGMTFVFVIGQAVYLGL).

This sequence belongs to the YciB family.

The protein resides in the cell inner membrane. In terms of biological role, plays a role in cell envelope biogenesis, maintenance of cell envelope integrity and membrane homeostasis. This Thioalkalivibrio sulfidiphilus (strain HL-EbGR7) protein is Inner membrane-spanning protein YciB.